Here is a 246-residue protein sequence, read N- to C-terminus: 3-oxoacyl-[acyl-carrier-protein] reductase FabG (246 aa).

NADP(+) contacts are provided by residues 11–14 (GASR), 62–63 (NV), and asparagine 89. Serine 141 is a substrate binding site. The active-site Proton acceptor is tyrosine 154. NADP(+) is bound by residues 154-158 (YVATK) and isoleucine 187.

This sequence belongs to the short-chain dehydrogenases/reductases (SDR) family. Homotetramer.

The enzyme catalyses a (3R)-hydroxyacyl-[ACP] + NADP(+) = a 3-oxoacyl-[ACP] + NADPH + H(+). The protein operates within lipid metabolism; fatty acid biosynthesis. Catalyzes the NADPH-dependent reduction of beta-ketoacyl-ACP substrates to beta-hydroxyacyl-ACP products, the first reductive step in the elongation cycle of fatty acid biosynthesis. In Staphylococcus aureus (strain Mu50 / ATCC 700699), this protein is 3-oxoacyl-[acyl-carrier-protein] reductase FabG (fabG).